A 1014-amino-acid chain; its full sequence is Protein argonaute 2 (1014 aa).

Residues 1–15 (MERGGYRGGRGDGRG) are compositionally biased toward basic and acidic residues. The segment at 1 to 137 (MERGGYRGGR…PSTSTTVVSE (137 aa)) is disordered. Composition is skewed to gly residues over residues 18 to 29 (GRGYGGGGGGGE) and 49 to 58 (RGGGNRGQGR). Residues 83-104 (QFQQPRPQVAPQPSQAPASYAG) show a composition bias toward low complexity. Gly residues predominate over residues 105–114 (SVGGVAGRGA). Over residues 121–137 (VPSDSASPSTSTTVVSE) the composition is skewed to low complexity. The region spanning 369 to 482 (SVIEYLKLYF…VPMEFCDLVE (114 aa)) is the PAZ domain. Residues 666 to 965 (LVLCAMSRKD…VAFRGRMYHE (300 aa)) enclose the Piwi domain. 3 interaction with guide RNA regions span residues 857-858 (KR), 900-908 (HHGGIGTSK), and 937-959 (FTRC…VAFR).

This sequence belongs to the argonaute family. Ago subfamily. Interacts with NERD.

Involved in RNA-mediated post-transcriptional gene silencing (PTGS). Main component of the RNA-induced silencing complex (RISC) that binds to a short guide RNA such as microRNA (miRNA) or small interfering RNA (siRNA). RISC uses the mature miRNA or siRNA as a guide for slicer-directed cleavage of homologous mRNAs to repress gene expression. Associates mainly with siRNAs of 21 nucleotide in length and preferentially recruits small RNAs with a 5' terminal adenosine. Probably involved in antiviral RNA silencing. Associates with siRNA derived from cucumber mosaic virus (CMV). Targeted by turnip yellows virus (TuYV) protein P0 (via F-box-like domain) for probable proteasome degradation and thereby inactivating AGO2 function in RNA silencing. Required to direct NERD-dependent DNA methylation and silencing. The polypeptide is Protein argonaute 2 (AGO2) (Arabidopsis thaliana (Mouse-ear cress)).